We begin with the raw amino-acid sequence, 191 residues long: Peptidyl-tRNA hydrolase (191 aa).

Y14 contributes to the tRNA binding site. Residue H19 is the Proton acceptor of the active site. TRNA is bound by residues Y65, N67, and N113.

It belongs to the PTH family. Monomer.

The protein localises to the cytoplasm. It carries out the reaction an N-acyl-L-alpha-aminoacyl-tRNA + H2O = an N-acyl-L-amino acid + a tRNA + H(+). Functionally, hydrolyzes ribosome-free peptidyl-tRNAs (with 1 or more amino acids incorporated), which drop off the ribosome during protein synthesis, or as a result of ribosome stalling. Its function is as follows. Catalyzes the release of premature peptidyl moieties from peptidyl-tRNA molecules trapped in stalled 50S ribosomal subunits, and thus maintains levels of free tRNAs and 50S ribosomes. The protein is Peptidyl-tRNA hydrolase of Nitrosospira multiformis (strain ATCC 25196 / NCIMB 11849 / C 71).